The chain runs to 88 residues: Long neurotoxin LNTX-2 (88 aa).

A signal peptide spans 1–21 (MKTLLLTLVVVTIVCLDFGYA). Disulfide bonds link C24–C42, C35–C63, C67–C78, and C79–C84.

Belongs to the three-finger toxin family. Long-chain subfamily. Type II alpha-neurotoxin sub-subfamily. Expressed by the venom gland.

The protein localises to the secreted. In terms of biological role, binds with high affinity to muscular nicotinic acetylcholine receptors (nAChRs), whereas it binds with a low affinity to neuronal alpha-7/CHRNA7 nAChRs. In Demansia vestigiata (Lesser black whip snake), this protein is Long neurotoxin LNTX-2.